We begin with the raw amino-acid sequence, 442 residues long: Exodeoxyribonuclease 7 large subunit (442 aa).

This sequence belongs to the XseA family. As to quaternary structure, heterooligomer composed of large and small subunits.

Its subcellular location is the cytoplasm. The enzyme catalyses Exonucleolytic cleavage in either 5'- to 3'- or 3'- to 5'-direction to yield nucleoside 5'-phosphates.. Functionally, bidirectionally degrades single-stranded DNA into large acid-insoluble oligonucleotides, which are then degraded further into small acid-soluble oligonucleotides. This Shewanella sediminis (strain HAW-EB3) protein is Exodeoxyribonuclease 7 large subunit.